Consider the following 188-residue polypeptide: HTH-type transcriptional repressor AcnR (188 aa).

Positions 10–70 (VNSRQEILEG…ALAREDAARM (61 aa)) constitute an HTH tetR-type domain. The segment at residues 33-52 (TVRRLEEATGKSRGAIFHHF) is a DNA-binding region (H-T-H motif). Citrate is bound by residues 79–80 (LV), arginine 130, and asparagine 134. Glutamate 181 contributes to the Mg(2+) binding site. Citrate is bound at residue arginine 185.

In terms of assembly, homodimer.

Functionally, acnR negatively controls the expression of the aconitase gene acn. The protein is HTH-type transcriptional repressor AcnR of Corynebacterium efficiens (strain DSM 44549 / YS-314 / AJ 12310 / JCM 11189 / NBRC 100395).